Here is a 2348-residue protein sequence, read N- to C-terminus: Transcription factor HIVEP3 (2348 aa).

The tract at residues 1-105 (MDPDQSIKGT…AFMSPGKPEH (105 aa)) is disordered. The segment covering 27–72 (IQTSVSSSAPYPGSGTTAPSESATQELLATQPFSGPSQEKTGQQQK) has biased composition (polar residues). 2 C2H2-type zinc fingers span residues 185–207 (YICQ…IRSH) and 213–235 (YPCG…RKSH). Residues 185–235 (YICQYCSRPCAKPSVLQKHIRSHTGERPYPCGPCGFSFKTKSNLYKHRKSH) form a ZAS1 region. A no DNA binding activity or transactivation activity, but complete prevention of TRAF-dependent NF-Kappa-B activation; associates with TRAF2 and JUN region spans residues 204 to 1055 (IRSHTGERPY…KGKQESSEEP (852 aa)). Disordered regions lie at residues 239–401 (IKAG…SPPN), 475–532 (DSVK…PLLR), and 561–628 (ADPE…TKKG). The tract at residues 257–280 (EMERIPGEEFEEPTEGESTDSEEE) is acidic 1. The segment covering 264–281 (EEFEEPTEGESTDSEEET) has biased composition (acidic residues). A compositionally biased stretch (low complexity) spans 298–323 (PLLSSSLYSSGSHGSSQERCSLSQSS). The span at 338–352 (SSEHPLSHKPEDTHT) shows a compositional bias: basic and acidic residues. Composition is skewed to polar residues over residues 372–401 (TFLS…SPPN) and 485–495 (TRRSSVESPKS). Low complexity-rich tracts occupy residues 513 to 527 (QSLL…STHP) and 589 to 605 (PLGG…SSKD). Positions 606–623 (PTSKPSDEPEPKESDLTK) are enriched in basic and acidic residues. The CCHC HIVEP-type zinc finger occupies 633-663 (GANYECTICGARYKKRDNYEAHKKYYCSELQ). 5 disordered regions span residues 692 to 1098 (KLGA…PPYT), 1229 to 1274 (LPPV…TSAP), 1386 to 1427 (EGCS…KADE), 1441 to 1555 (STED…EGTD), and 1654 to 1694 (EVHL…GEPA). A compositionally biased stretch (low complexity) spans 736-749 (STKSPAEASKSAPS). An acidic 2 region spans residues 844 to 865 (EEPDRPDTEPEPPPKEPEKTEE). A compositionally biased stretch (basic and acidic residues) spans 845–865 (EPDRPDTEPEPPPKEPEKTEE). The Nuclear localization signal signature appears at 885–891 (PKKKRLR). Low complexity predominate over residues 893–929 (AEMAQSSGESSFESSVPLSRSPSQESSISLSGSSRSA). Over residues 930–939 (SFDREDHGKA) the composition is skewed to basic and acidic residues. Polar residues-rich tracts occupy residues 975–985 (SEQSPNVPHSS), 1062–1073 (TKSSVPQISVGT), and 1247–1256 (SSSTEYSSDI). The stretch at 1409–1433 (METQQQKRVKEEEASKADEKLELVS) forms a coiled coil. Composition is skewed to basic and acidic residues over residues 1416 to 1427 (RVKEEEASKADE), 1442 to 1452 (TEDRKKTEKPH), and 1518 to 1527 (VKKEDPKEQT). Over residues 1538 to 1547 (LPLSDTSPKP) the composition is skewed to low complexity. Residues 1665–1694 (SQKDPARVEKEEKQGKAEEGTPTSKRGEPA) show a composition bias toward basic and acidic residues. 2 consecutive C2H2-type zinc fingers follow at residues 1720 to 1742 (YVCE…IRTH) and 1748 to 1772 (YVCK…SKAH). Residues 1720–1772 (YVCEECGIRCKKPSMLKKHIRTHTDVRPYVCKHCHFAFKTKGNLTKHMKSKAH) are ZAS2. The interval 1783–1841 (EELEAEEGTSDDLHQDSEGQEGAEAVEEHQFSDLEDSDSDSDLDEDEEEEEEEEESQDE) is acidic 3. 2 disordered regions span residues 1786-1990 (EAEE…HLCG) and 2009-2038 (PAGL…ESPP). Acidic residues predominate over residues 1815-1840 (DLEDSDSDSDLDEDEEEEEEEEESQD). Positions 1871 to 1902 (PDSTSDEVPQGSSISEATHLTASSCSTPSRGT) are enriched in polar residues. 5 consecutive repeat copies span residues 1897–1900 (TPSR), 1927–1930 (SPRR), 1933–1936 (SPSK), 1961–1964 (SPAR), and 2024–2027 (SPTR). Residues 1952–1961 (KNDSSPQQCS) are compositionally biased toward polar residues. The 5 X 4 AA tandem repeats of [ST]-P-X-[RK] stretch occupies residues 2053–2148 (SPSADKSGLG…QLLSRAPCPL (96 aa)). Disordered regions lie at residues 2184–2265 (SDLT…QGHQ) and 2284–2348 (KASS…PPSI). Residues 2203–2216 (SPSASVSPVAKVSK) show a composition bias toward low complexity. A compositionally biased stretch (polar residues) spans 2293–2314 (RSSSMDCLAETSTYSPPRSRNL).

In terms of assembly, interacts with TRAF1 and TRAF2 as well as with JUN. Forms a multimeric complex with RUNX2 and E3 ubiquitin ligase WWP1. Phosphorylated on threonine and serine residues. Phosphorylation by cyclin-dependent kinase CDK1 decreases HIVEP3 DNA binding affinity, and by epidermal growth factor receptor kinase increases its DNA binding affinity. Expressed in macrophages, lymphocytes, brain, thymus, spleen and bone marrow. Expressed in osteoblasts, whole bone and, to a lesser extent, in osteoclasts.

It localises to the cytoplasm. The protein localises to the nucleus. In terms of biological role, plays a role of transcription factor; binds to recognition signal sequences (Rss heptamer) for somatic recombination of immunoglobulin and T-cell receptor gene segments; Also binds to the kappa-B motif of gene such as S100A4, involved in cell progression and differentiation. Kappa-B motif is a gene regulatory element found in promoters and enhancers of genes involved in immunity, inflammation, and growth and that responds to viral antigens, mitogens, and cytokines. Involvement of HIVEP3 in cell growth is strengthened by the fact that its down-regulation promotes cell cycle progression with ultimate formation of multinucleated giant cells. Strongly inhibits TNF-alpha-induced NF-kappa-B activation; Interferes with nuclear factor NF-kappa-B by several mechanisms: as transcription factor, by competing for Kappa-B motif and by repressing transcription in the nucleus; through a non transcriptional process, by inhibiting nuclear translocation of RELA by association with TRAF2, an adapter molecule in the tumor necrosis factor signaling, which blocks the formation of IKK complex. Interaction with TRAF proteins inhibits both NF-Kappa-B-mediated and c-Jun N-terminal kinase/JNK-mediated responses that include apoptosis and pro-inflammatory cytokine gene expression. Positively regulates the expression of IL2 in T-cell. Essential regulator of adult bone formation. This Mus musculus (Mouse) protein is Transcription factor HIVEP3 (Hivep3).